The primary structure comprises 160 residues: Transcription antitermination protein NusB (160 aa).

This sequence belongs to the NusB family.

Its function is as follows. Involved in transcription antitermination. Required for transcription of ribosomal RNA (rRNA) genes. Binds specifically to the boxA antiterminator sequence of the ribosomal RNA (rrn) operons. In Rhizobium johnstonii (strain DSM 114642 / LMG 32736 / 3841) (Rhizobium leguminosarum bv. viciae), this protein is Transcription antitermination protein NusB.